We begin with the raw amino-acid sequence, 222 residues long: MKNNAQLLMPREKMLKFGISALTDVELLALFLRTGTRGKDVLTLAKEMLENFGSLYGLLTSEYEQFSGVHGIGVAKFAQLKGIAELARRYYNVRMREESPLLSPEMTREFLQSQLTGEEREIFMVIFLDSQHRVITHSRIFSGTLNHVEVHPREIIREAIKINASALILAHNHPSGCAEPSKADKLITERIIKSCQFMDLRVLDHIVIGRGEYVSFAERGWI.

Residues 100 to 222 form the MPN domain; the sequence is PLLSPEMTRE…YVSFAERGWI (123 aa). His-171, His-173, and Asp-184 together coordinate Zn(2+). A JAMM motif motif is present at residues 171–184; that stretch reads HNHPSGCAEPSKAD.

The protein belongs to the UPF0758 family. YicR subfamily.

This Shigella dysenteriae serotype 1 (strain Sd197) protein is UPF0758 protein YicR.